Consider the following 136-residue polypeptide: Mini-ribonuclease 3 (136 aa).

The active site involves Asp20.

The protein belongs to the MrnC RNase family. Homodimer. It depends on Mg(2+) as a cofactor.

The protein localises to the cytoplasm. Functionally, involved in correct processing of both the 5' and 3' ends of 23S rRNA precursor. Processes 30S rRNA precursor transcript even in absence of ribonuclease 3 (Rnc); Rnc processes 30S rRNA into smaller rRNA precursors. In Listeria monocytogenes serovar 1/2a (strain ATCC BAA-679 / EGD-e), this protein is Mini-ribonuclease 3.